Reading from the N-terminus, the 235-residue chain is Auracyanin-B (235 aa).

Over residues 1–21 the composition is skewed to low complexity; the sequence is MSWRGSGRSNFRSRSSSNGGS. 2 disordered regions span residues 1 to 27 and 64 to 107; these read MSWR…SGGS and ATPR…NVVN. Positions 1 to 56 are cleaved as a signal peptide; the sequence is MSWRGSGRSNFRSRSSSNGGSTFSGGSAGGPPLIVMMGLAFGAGLIMLIVMIASNA. A propeptide spanning residues 57–80 is cleaved from the precursor; the sequence is TAGGFVAATPRPTATPRPTAAPAP. Positions 69-86 are enriched in pro residues; the sequence is TATPRPTAAPAPTQPPAA. A compositionally biased stretch (low complexity) spans 87-100; that stretch reads QPTTAPATQAANAP. In terms of domain architecture, Plastocyanin-like spans 111–235; it reads AQTVEVRAAP…GMKGTLTVTP (125 aa). Residues H152, C217, H222, and M227 each contribute to the Cu cation site.

This sequence belongs to the multicopper oxidase family. Cu cation is required as a cofactor. Post-translationally, glycosylated.

It is found in the cell membrane. Functionally, probably a soluble electron acceptor for the integral membrane protein electron transfer alternative complex III (ACIII). This is Auracyanin-B from Chloroflexus aurantiacus (strain ATCC 29366 / DSM 635 / J-10-fl).